The following is a 572-amino-acid chain: Proline--tRNA ligase (572 aa).

Belongs to the class-II aminoacyl-tRNA synthetase family. ProS type 1 subfamily. Homodimer.

It is found in the cytoplasm. It carries out the reaction tRNA(Pro) + L-proline + ATP = L-prolyl-tRNA(Pro) + AMP + diphosphate. Functionally, catalyzes the attachment of proline to tRNA(Pro) in a two-step reaction: proline is first activated by ATP to form Pro-AMP and then transferred to the acceptor end of tRNA(Pro). As ProRS can inadvertently accommodate and process non-cognate amino acids such as alanine and cysteine, to avoid such errors it has two additional distinct editing activities against alanine. One activity is designated as 'pretransfer' editing and involves the tRNA(Pro)-independent hydrolysis of activated Ala-AMP. The other activity is designated 'posttransfer' editing and involves deacylation of mischarged Ala-tRNA(Pro). The misacylated Cys-tRNA(Pro) is not edited by ProRS. In Escherichia coli O157:H7, this protein is Proline--tRNA ligase.